Reading from the N-terminus, the 117-residue chain is MIYGIGIDLIEIGRIKTLMERQKKLPERILSKDELTKFESFSHEQRRAEFLAGRFACKEAFSKALGTGLGKHVSFQDINCQNDELGRPYIRYEGFKVHVSITHTENYAASQVILEKM.

Mg(2+) is bound by residues Asp8 and Glu59.

This sequence belongs to the P-Pant transferase superfamily. AcpS family. Mg(2+) is required as a cofactor.

The protein localises to the cytoplasm. The catalysed reaction is apo-[ACP] + CoA = holo-[ACP] + adenosine 3',5'-bisphosphate + H(+). Transfers the 4'-phosphopantetheine moiety from coenzyme A to a Ser of acyl-carrier-protein. The polypeptide is Holo-[acyl-carrier-protein] synthase (Staphylococcus carnosus (strain TM300)).